Consider the following 67-residue polypeptide: uncharacterized protein (67 aa).

This is an uncharacterized protein from Escherichia coli (Bacteriophage T4).